The sequence spans 822 residues: Valine--tRNA ligase (822 aa).

The 'HIGH' region signature appears at 41–51 (PNVTGQLHLGH). The 'KMSKS' region signature appears at 511–515 (KMSKS). An ATP-binding site is contributed by Lys-514. Residues 765 to 822 (EQKGRELKEIQFLKSEILRAEKILTNKGFLEKAPREKIDLERTKLEKLKEKLAFYEKK) adopt a coiled-coil conformation.

This sequence belongs to the class-I aminoacyl-tRNA synthetase family. ValS type 1 subfamily. Monomer.

It is found in the cytoplasm. The enzyme catalyses tRNA(Val) + L-valine + ATP = L-valyl-tRNA(Val) + AMP + diphosphate. In terms of biological role, catalyzes the attachment of valine to tRNA(Val). As ValRS can inadvertently accommodate and process structurally similar amino acids such as threonine, to avoid such errors, it has a 'posttransfer' editing activity that hydrolyzes mischarged Thr-tRNA(Val) in a tRNA-dependent manner. In Mesomycoplasma hyopneumoniae (strain 232) (Mycoplasma hyopneumoniae), this protein is Valine--tRNA ligase.